Here is a 147-residue protein sequence, read N- to C-terminus: HTH-type transcriptional regulator HmrR (147 aa).

An HTH merR-type domain is found at 1-69 (MNIGEASKVS…VEQIKELLAL (69 aa)). Positions 4 to 23 (GEASKVSGVSSKMIRYYEQI) form a DNA-binding region, H-T-H motif.

Homodimer.

The protein resides in the cytoplasm. Its function is as follows. Regulates the transcription of actP. It detects cytoplasmic copper stress and activates transcription in response to increasing copper concentrations. In the absence of copper, it negatively regulates the transcription of actP. The protein is HTH-type transcriptional regulator HmrR (hmrR) of Sinorhizobium medicae (strain WSM419) (Ensifer medicae).